Consider the following 178-residue polypeptide: Germinal center-associated signaling and motility protein (178 aa).

A Phosphoserine modification is found at Ser-99. Position 148 is a phosphotyrosine (Tyr-148).

As to quaternary structure, interacts with ACTB and MYH2; the interaction with MYH2 is increased by IL6-induced phosphorylation. Interacts (via C-terminus) with ARHGEF11 (via DH domain). Interacts with ARHGEF12. Interacts with SYK; the interaction increases after B-cell receptor stimulation, resulting in enhanced SYK autophosphorylation and activity. Phosphorylation on tyrosine residues can be induced by IL6. Phosphorylation is mediated by LYN. Post-translationally, targeted by the ubiquitin E3 ligase subunit FBXO10 to mediate its ubiquitination and degradation. Expressed in diffuse large B-cell lymphoma (DLBCL) and several germinal center (GC)-like lymphoma cell lines (at protein level). Highly expressed in normal GC lymphocytes and GC-derived malignancies. Expressed in thymus and spleen.

It is found in the cytoplasm. Its subcellular location is the cell membrane. In terms of biological role, involved in the negative regulation of lymphocyte motility. It mediates the migration-inhibitory effects of IL6. Serves as a positive regulator of the RhoA signaling pathway. Enhancement of RhoA activation results in inhibition of lymphocyte and lymphoma cell motility by activation of its downstream effector ROCK. Is a regulator of B-cell receptor signaling, that acts through SYK kinase activation. The sequence is that of Germinal center-associated signaling and motility protein (GCSAM) from Homo sapiens (Human).